The chain runs to 361 residues: Chorismate synthase (361 aa).

NADP(+)-binding residues include Arg48 and Arg54. Residues 125-127, 240-241, Gly286, 301-305, and Arg327 contribute to the FMN site; these read RSS, NA, and KPTSS.

Belongs to the chorismate synthase family. Homotetramer. It depends on FMNH2 as a cofactor.

It catalyses the reaction 5-O-(1-carboxyvinyl)-3-phosphoshikimate = chorismate + phosphate. It functions in the pathway metabolic intermediate biosynthesis; chorismate biosynthesis; chorismate from D-erythrose 4-phosphate and phosphoenolpyruvate: step 7/7. In terms of biological role, catalyzes the anti-1,4-elimination of the C-3 phosphate and the C-6 proR hydrogen from 5-enolpyruvylshikimate-3-phosphate (EPSP) to yield chorismate, which is the branch point compound that serves as the starting substrate for the three terminal pathways of aromatic amino acid biosynthesis. This reaction introduces a second double bond into the aromatic ring system. This Magnetococcus marinus (strain ATCC BAA-1437 / JCM 17883 / MC-1) protein is Chorismate synthase.